The sequence spans 214 residues: MKAYQRHFIELALAKNVLKFGEFTLKSGRVSPYFFNAGLFNTGRDLALLGQFYAQTLIDNHVPCDVLFGPAYKGIPIATTTAVALVEHHDMDVPYCFNRKEAKDHGEGGTLVGSPLTGNVVIVDDVITAGTAIRESMEIIKQHDATLSGVLLSLDRQEKGRGSLSAIQELERDYQCQVYSIITLDDLISYLTESETLSAHLPAVKAYRERYGIN.

Residue Lys-26 participates in 5-phospho-alpha-D-ribose 1-diphosphate binding. Position 34–35 (34–35 (FF)) interacts with orotate. 5-phospho-alpha-D-ribose 1-diphosphate contacts are provided by residues 72-73 (YK), Arg-99, Lys-100, Lys-103, His-105, and 124-132 (DDVITAGTA). Orotate contacts are provided by Thr-128 and Arg-156.

This sequence belongs to the purine/pyrimidine phosphoribosyltransferase family. PyrE subfamily. As to quaternary structure, homodimer. Mg(2+) serves as cofactor.

The catalysed reaction is orotidine 5'-phosphate + diphosphate = orotate + 5-phospho-alpha-D-ribose 1-diphosphate. The protein operates within pyrimidine metabolism; UMP biosynthesis via de novo pathway; UMP from orotate: step 1/2. Functionally, catalyzes the transfer of a ribosyl phosphate group from 5-phosphoribose 1-diphosphate to orotate, leading to the formation of orotidine monophosphate (OMP). The chain is Orotate phosphoribosyltransferase from Proteus mirabilis (strain HI4320).